Here is an 856-residue protein sequence, read N- to C-terminus: PR domain zinc finger protein 1 (856 aa).

The SET domain maps to 115–233 (PRNLLFKYAA…ANQELLVWYC (119 aa)). Disordered stretches follow at residues 357 to 399 (THSP…APGL) and 532 to 571 (GAAASMKDESSPPSGSPTAGTAATSEHVVQPKATSSVMAA). Composition is skewed to low complexity over residues 373–393 (SSPEQSLKSSSPHSSPGNTVS) and 542–556 (SPPSGSPTAGTAATS). The segment at 558 to 605 (HVVQPKATSSVMAAPSTDGAMNLIKNKRNMTGYKTLPYPLKKQNGKIK) is interaction with PIAS1. C2H2-type zinc fingers lie at residues 606 to 628 (YECNVCAKTFGQLSNLKVHLRVH), 634 to 656 (FKCQTCNKGFTQLAHLQKHYLVH), 662 to 684 (HECQVCHKRFSSTSNLKTHLRLH), and 690 to 712 (YQCKVCPAKFTQFVHLKLHKRLH). Residue K847 forms a Glycyl lysine isopeptide (Lys-Gly) (interchain with G-Cter in SUMO1); alternate linkage. K847 participates in a covalent cross-link: Glycyl lysine isopeptide (Lys-Gly) (interchain with G-Cter in SUMO2); alternate.

Belongs to the class V-like SAM-binding methyltransferase superfamily. As to quaternary structure, interacts with PRMT5. Interacts with FBXO10. Interacts with FBXO11. Interacts with multiple nuclear sumoylation E3 ligases, including CBX4, PIAS1, PIAS2, PIAS3, PIAS4, PML and RNF4, but not RANBP2. Interacts with LDB1, SMARCD3 and SMARCC1. Interacts with EEIG1; following TNFSF11/RANKL stimulation in bone marrow-derived macrophages, the interaction promotes the binding of PRDM1/BLIMP1 to the gene promoter of IRF8. Sumoylation at Lys-847 by PIAS1 increases transcriptional repressor activity, and is critical for plasma cell differentiation. Can be sumoylated with SUMO1 and SUMO2 by PML. Degradation of the wild-type protein mostly depends upon sumoylation, rather than ubiquitination. Desumoylated by SENP1 and SENP6. In terms of processing, ubiquitinated by SCF(FBXO11), leading to its degradation by the proteasome. Expressed in bone marrow macrophages (at protein level). Expressed in innate lymphocytes, including tissue-resident conventional natural killer (cNK) cells in liver. Expressed also weakly in tissue-resident natural killer (trNK) and natural killer T (NKT) cells in liver. In terms of tissue distribution, expressed in bone marrow, spleen and lymph node but not in brain, heart, kidney, liver, ovary or muscle. Weak expression detected in the lung. As to expression, expressed only in the yolk sac. Expressed in embryo, yolk sac, placenta, splenocytes, and activated T-cells.

The protein resides in the nucleus. It is found in the cytoplasm. Transcription factor that mediates a transcriptional program in various innate and adaptive immune tissue-resident lymphocyte T cell types such as tissue-resident memory T (Trm), natural killer (trNK) and natural killer T (NKT) cells and negatively regulates gene expression of proteins that promote the egress of tissue-resident T-cell populations from non-lymphoid organs. Plays a role in the development, retention and long-term establishment of adaptive and innate tissue-resident lymphocyte T cell types in non-lymphoid organs, such as the skin and gut, but also in other nonbarrier tissues like liver and kidney, and therefore may provide immediate immunological protection against reactivating infections or viral reinfection. Binds specifically to the PRDI element in the promoter of the beta-interferon gene. Drives the maturation of B-lymphocytes into Ig secreting cells. Associates with the transcriptional repressor ZNF683 to chromatin at gene promoter regions. Binds to the promoter and acts as a transcriptional repressor of IRF8, thereby promotes transcription of osteoclast differentiation factors such as NFATC1 and EEIG1. This chain is PR domain zinc finger protein 1 (Prdm1), found in Mus musculus (Mouse).